A 112-amino-acid chain; its full sequence is Gonad-inhibiting hormone (112 aa).

The N-terminal stretch at 1-31 (MVTRVGSGFSVQRVWLLLVIVVVLCGSVTQQ) is a signal peptide. 3 disulfide bridges follow: cysteine 41/cysteine 78, cysteine 58/cysteine 74, and cysteine 61/cysteine 87. Alanine 109 carries the post-translational modification Alanine amide.

Produced in the eyestalk X-organ sinus gland complex of male and female lobsters.

It is found in the secreted. Inhibits vitellogenesis in female animals. Plays a prominent role in the regulation of reproduction/molting processes. This chain is Gonad-inhibiting hormone, found in Homarus americanus (American lobster).